The following is a 197-amino-acid chain: Probable GTP-binding protein EngB (197 aa).

The 174-residue stretch at 22–195 (ELPEVALAGR…WKAIYALITE (174 aa)) folds into the EngB-type G domain. GTP contacts are provided by residues 30–37 (GRSNVGKS), 57–61 (GKTQT), 75–78 (DVPG), 142–145 (TKLD), and 174–176 (FSA). Mg(2+) contacts are provided by Ser37 and Thr59.

It belongs to the TRAFAC class TrmE-Era-EngA-EngB-Septin-like GTPase superfamily. EngB GTPase family. Mg(2+) serves as cofactor.

Its function is as follows. Necessary for normal cell division and for the maintenance of normal septation. This chain is Probable GTP-binding protein EngB, found in Exiguobacterium sp. (strain ATCC BAA-1283 / AT1b).